We begin with the raw amino-acid sequence, 500 residues long: Transcription termination/antitermination protein NusA (500 aa).

Residues 135-205 (GEIVTGVVKK…RGAQLFVTRS (71 aa)) enclose the S1 motif domain. A KH domain is found at 307 to 373 (KHTMDIAVEA…FTKYLDIDEE (67 aa)). A run of 2 repeats spans residues 369–419 (DIDE…KNAL) and 444–494 (GLDR…RNIC). Residues 369-494 (DIDEEFATVL…ELIMAARNIC (126 aa)) form a 2 X 51 AA approximate repeats region.

It belongs to the NusA family. Monomer. Binds directly to the core enzyme of the DNA-dependent RNA polymerase and to nascent RNA.

The protein localises to the cytoplasm. Its function is as follows. Participates in both transcription termination and antitermination. The chain is Transcription termination/antitermination protein NusA from Salmonella typhimurium (strain LT2 / SGSC1412 / ATCC 700720).